Here is a 154-residue protein sequence, read N- to C-terminus: Secreted RxLR effector protein PITG_21681 (154 aa).

Positions 1 to 20 are cleaved as a signal peptide; sequence MRRYAALMVIDAVLLSTSQA. The interval 42-70 is disordered; sequence SAERDGGIPNKRSLRRISVTESNDGERDE. The RxLR-dEER signature appears at 53–72; that stretch reads RSLRRISVTESNDGERDEER.

It belongs to the RxLR effector family.

It is found in the secreted. The protein resides in the host cell. Functionally, secreted effector that is involved in host plant infection. Increases the susceptibility to P.infestans and reduces the plant growth. Affects the expression of host genes. The polypeptide is Secreted RxLR effector protein PITG_21681 (Phytophthora infestans (strain T30-4) (Potato late blight agent)).